Consider the following 243-residue polypeptide: Pyridoxine 5'-phosphate synthase (243 aa).

N9 contributes to the 3-amino-2-oxopropyl phosphate binding site. Position 11 to 12 (11 to 12 (DH)) interacts with 1-deoxy-D-xylulose 5-phosphate. Position 20 (R20) interacts with 3-amino-2-oxopropyl phosphate. H45 (proton acceptor) is an active-site residue. 1-deoxy-D-xylulose 5-phosphate is bound by residues R47 and H52. The active-site Proton acceptor is E72. Position 102 (T102) interacts with 1-deoxy-D-xylulose 5-phosphate. The active-site Proton donor is H193. Residues G194 and 215-216 (GH) contribute to the 3-amino-2-oxopropyl phosphate site.

Belongs to the PNP synthase family. As to quaternary structure, homooctamer; tetramer of dimers.

The protein localises to the cytoplasm. It carries out the reaction 3-amino-2-oxopropyl phosphate + 1-deoxy-D-xylulose 5-phosphate = pyridoxine 5'-phosphate + phosphate + 2 H2O + H(+). It participates in cofactor biosynthesis; pyridoxine 5'-phosphate biosynthesis; pyridoxine 5'-phosphate from D-erythrose 4-phosphate: step 5/5. In terms of biological role, catalyzes the complicated ring closure reaction between the two acyclic compounds 1-deoxy-D-xylulose-5-phosphate (DXP) and 3-amino-2-oxopropyl phosphate (1-amino-acetone-3-phosphate or AAP) to form pyridoxine 5'-phosphate (PNP) and inorganic phosphate. This is Pyridoxine 5'-phosphate synthase from Salmonella typhimurium (strain LT2 / SGSC1412 / ATCC 700720).